Reading from the N-terminus, the 258-residue chain is UPF0246 protein YaaA (258 aa).

The protein belongs to the UPF0246 family.

This is UPF0246 protein YaaA from Escherichia coli (strain 55989 / EAEC).